The following is a 440-amino-acid chain: MKAVLPDSKIPKRWYNILPDLPEPLAPPLDPETDEPIEPEKLLRIFAEELVKQEMSTERYIEIPKKVRELYAKIGRPTPLFRATNLEKALGTPARIYFKYEGATVTGSHKINTALAQAYYAKEQGIERLVTETGAGQWGTALSLAGALLGLKIRVYMARASYQQKPYRKTIMRLYGAEIYPSPSDRTEIGRKFLSEDPNHPGGLGIAISEAIEDVLKDEKARYALGSVLNHVLMHQTVIGLEAQEQMKEFEEPDVIIGCVGGGSNFAGLAYPFVRDVLSGKADYEFIAVEPKAAPSMTRGVYKYDFGDSGGYTPKMKMHTLGHTYYVPPIHAGGLRYHGLAPTLSILINHGIVKPVAYHQTEVFQAAELFAKTEGIIPAPESAHAIKGVIDRALKAKEEGREEVILFNLSGHGLLDLKGYEDYLDGKLEDYEPDYFPALG.

The residue at position 110 (K110) is an N6-(pyridoxal phosphate)lysine.

This sequence belongs to the TrpB family. As to quaternary structure, tetramer of two alpha and two beta chains. It depends on pyridoxal 5'-phosphate as a cofactor.

It carries out the reaction (1S,2R)-1-C-(indol-3-yl)glycerol 3-phosphate + L-serine = D-glyceraldehyde 3-phosphate + L-tryptophan + H2O. It participates in amino-acid biosynthesis; L-tryptophan biosynthesis; L-tryptophan from chorismate: step 5/5. Functionally, the beta subunit is responsible for the synthesis of L-tryptophan from indole and L-serine. This chain is Tryptophan synthase beta chain, found in Thermococcus gammatolerans (strain DSM 15229 / JCM 11827 / EJ3).